We begin with the raw amino-acid sequence, 283 residues long: MSTRRSSTRADSTTKRPASPNSTPNAALGIFVAIARQILFIDARKVALFYLAFVTVLSFIESRIELDSTYYLVQKHSVLNQYGVKMGWFWTLVIVGPFIWFSSKAHNRRDRDQPIVDVCRLGVGTACWYFSVQFFHKVLALTSMCDKGRTLTRAQCSEKEGVWTPGYDISGHCFLMIYSILIITEEAIAYRHYQQVTDAVHQMDGDREEHDRLTRCIQYFFVAMLFLHAFWFKQIIISVLYYHIFIEEILGAVAAVVCWFVTYRMLYPAGFLASPIRRTVGRK.

Residues 1 to 11 show a composition bias toward low complexity; the sequence is MSTRRSSTRAD. The tract at residues 1–21 is disordered; that stretch reads MSTRRSSTRADSTTKRPASPN. Over 1 to 39 the chain is Cytoplasmic; that stretch reads MSTRRSSTRADSTTKRPASPNSTPNAALGIFVAIARQIL. The helical transmembrane segment at 40 to 60 threads the bilayer; the sequence is FIDARKVALFYLAFVTVLSFI. At 61–81 the chain is on the lumenal side; it reads ESRIELDSTYYLVQKHSVLNQ. Residues 82 to 102 traverse the membrane as a helical segment; that stretch reads YGVKMGWFWTLVIVGPFIWFS. The Cytoplasmic segment spans residues 103-120; that stretch reads SKAHNRRDRDQPIVDVCR. The chain crosses the membrane as a helical span at residues 121–141; that stretch reads LGVGTACWYFSVQFFHKVLAL. Over 142-168 the chain is Lumenal; it reads TSMCDKGRTLTRAQCSEKEGVWTPGYD. The helical transmembrane segment at 169–189 threads the bilayer; it reads ISGHCFLMIYSILIITEEAIA. Histidine 172 is a catalytic residue. At 190 to 219 the chain is on the cytoplasmic side; sequence YRHYQQVTDAVHQMDGDREEHDRLTRCIQY. Transmembrane regions (helical) follow at residues 220-240 and 241-261; these read FFVA…ISVL and YYHI…CWFV. The active site involves histidine 243. Residues 262–283 are Cytoplasmic-facing; sequence TYRMLYPAGFLASPIRRTVGRK.

This sequence belongs to the FIT family. FIT2 subfamily.

It is found in the endoplasmic reticulum membrane. It carries out the reaction an acyl-CoA + H2O = an acyl-4'-phosphopantetheine + adenosine 3',5'-bisphosphate + 2 H(+). Fatty acyl-coenzyme A (CoA) diphosphatase that hydrolyzes fatty acyl-CoA to yield acyl-4'-phosphopantetheine and adenosine 3',5'-bisphosphate. Preferentially hydrolyzes unsaturated long-chain acyl-CoA substrates in the endoplasmic reticulum (ER) lumen. This catalytic activity is required for maintaining ER structure and for lipid droplets (LDs) biogenesis, which are lipid storage organelles involved in maintaining lipid and energy homeostasis. May directly bind to diacylglycerol (DAGs) and triacylglycerol, which is also important for LD biogenesis. May support directional budding of nacent LDs from the ER into the cytosol by reducing DAG levels at sites of LD formation. May play a role in the regulation of cell morphology, ER morphology and cytoskeletal organization. This is Acyl-coenzyme A diphosphatase FITM2 from Caenorhabditis elegans.